Consider the following 432-residue polypeptide: MRLSKEFIGLGIITASLIFGSSLPDIYKGIVILIVAGCLWFFELLPLPVTSLAIPIMAVFLGIFNLKEALTYFAHPIIFLFLGGFMLAQALKNHNLDKFIAYKLLNYGKDFKTTCFLMFLSAYFLSMWISNTSATLILLPIALGLLHKKTGKLRDFLLLGVAYSASIGGIATIIGSPPNAIASSYLDYGFFSWFKVGFPISLLLFLICTLTLYIYFKKWIPKEDIAIQARMELSRNAYKLLVIFVLIASLWIISDYLSEIFNVQYFDSVIAIFAIILLFVFNLVEVNDFKKIDWGTLILFGGALCLGGVIVKSGANTFLSEKLIAILGNLTPIVLLFLVVTITIILTNFISNTGLTGIIVPILFGVSLGIPKEILILAVGMSASCSFILPVGTPPNAIVYSEGVKKEEMMKIGMILSILSAAVITLYSILYL.

13 consecutive transmembrane segments (helical) span residues 7-27 (FIGL…PDIY), 29-49 (GIVI…PLPV), 68-88 (EALT…FMLA), 124-144 (FLSM…IALG), 156-176 (FLLL…IIGS), 196-216 (VGFP…YIYF), 241-261 (LVIF…SEIF), 266-286 (FDSV…LVEV), 291-311 (KIDW…GVIV), 326-346 (ILGN…TIIL), 358-378 (IIVP…LILA), 379-399 (VGMS…NAIV), and 412-432 (IGMI…ILYL).

Belongs to the CitM (TC 2.A.11) transporter family.

It localises to the cell membrane. This is an uncharacterized protein from Methanocaldococcus jannaschii (strain ATCC 43067 / DSM 2661 / JAL-1 / JCM 10045 / NBRC 100440) (Methanococcus jannaschii).